A 276-amino-acid polypeptide reads, in one-letter code: Diaminopimelate epimerase (276 aa).

Residues asparagine 13, glutamine 46, and asparagine 66 each contribute to the substrate site. Catalysis depends on cysteine 75, which acts as the Proton donor. Residues 76–77 (GN), asparagine 159, asparagine 192, and 210–211 (ER) contribute to the substrate site. Cysteine 219 acts as the Proton acceptor in catalysis. Residue 220-221 (GT) coordinates substrate.

It belongs to the diaminopimelate epimerase family. Homodimer.

The protein localises to the cytoplasm. It carries out the reaction (2S,6S)-2,6-diaminopimelate = meso-2,6-diaminopimelate. It functions in the pathway amino-acid biosynthesis; L-lysine biosynthesis via DAP pathway; DL-2,6-diaminopimelate from LL-2,6-diaminopimelate: step 1/1. Catalyzes the stereoinversion of LL-2,6-diaminopimelate (L,L-DAP) to meso-diaminopimelate (meso-DAP), a precursor of L-lysine and an essential component of the bacterial peptidoglycan. This is Diaminopimelate epimerase from Aeromonas salmonicida (strain A449).